The following is a 722-amino-acid chain: Bifunctional UDP-N-acetylglucosamine 2-epimerase/N-acetylmannosamine kinase (722 aa).

UDP-binding residues include Arg-19, Ser-23, Arg-113, His-220, and Asn-253. CMP-N-acetyl-beta-neuraminate contacts are provided by Lys-259, Glu-271, Lys-280, and His-281. Positions 282, 301, 302, 307, and 321 each coordinate UDP. Positions 406–722 are N-acetylmannosamine kinase; the sequence is TLSALAVDLG…VLDYTTRRIH (317 aa). Residue Asp-413 participates in Mg(2+) binding. Gly-416 serves as a coordination point for an N-acyl-D-mannosamine 6-phosphate. ADP is bound by residues Thr-417, Asn-418, and Arg-420. An N-acyl-D-mannosamine 6-phosphate-binding residues include Gly-476, Arg-477, Thr-489, Asn-516, Asp-517, and Gly-545. The an N-acyl-D-mannosamine site is built by Gly-476, Arg-477, Thr-489, Asn-516, and Asp-517. The active site involves Asp-517. Positions 566 and 569 each coordinate an N-acyl-D-mannosamine. Position 569 (His-569) interacts with an N-acyl-D-mannosamine 6-phosphate. Zn(2+)-binding residues include His-569, Cys-579, Cys-581, and Cys-586. An N-acyl-D-mannosamine 6-phosphate is bound at residue Glu-588. Glu-588 contributes to the an N-acyl-D-mannosamine binding site.

It in the N-terminal section; belongs to the UDP-N-acetylglucosamine 2-epimerase family. This sequence in the C-terminal section; belongs to the ROK (NagC/XylR) family. In terms of assembly, homodimer. Homotetramer. Homohexamer. The hexameric form exhibits both enzyme activities, whereas the dimeric form only catalyzes the phosphorylation of N-acyl-D-mannosamine. In terms of processing, phosphorylated. Phosphorylation by PKC activates the UDP-N-acetylglucosamine 2-epimerase activity. In terms of tissue distribution, widely expressed. Highest expression is observed in liver.

The protein localises to the cytoplasm. It is found in the cytosol. It catalyses the reaction UDP-N-acetyl-alpha-D-glucosamine + H2O = aldehydo-N-acetyl-D-mannosamine + UDP + H(+). The enzyme catalyses an N-acyl-D-mannosamine + ATP = an N-acyl-D-mannosamine 6-phosphate + ADP + H(+). Its pathway is amino-sugar metabolism; N-acetylneuraminate biosynthesis. The UDP-N-acetylglucosamine 2-epimerase activity, in contrast to the N-acetylmannosamine kinase activity, exhibits allosteric regulation by cytidine monophosphate-N-acetylneuraminic acid (CMP-Neu5Ac), the end product of neuraminic acid biosynthesis. Moreover, the activity is contingent upon the oligomeric state of the enzyme. The monomeric form is inactive, while the dimeric form selectively catalyzes the phosphorylation of N-acetylmannosamine. The hexameric form, on the other hand, demonstrates full proficiency in both enzyme activities. Furthermore, the UDP-N-acetylglucosamine 2-epimerase activity is increased by PKC-mediated phosphorylation. Its function is as follows. Bifunctional enzyme that possesses both UDP-N-acetylglucosamine 2-epimerase and N-acetylmannosamine kinase activities, and serves as the initiator of the biosynthetic pathway leading to the production of N-acetylneuraminic acid (NeuAc), a critical precursor in the synthesis of sialic acids. By catalyzing this pivotal and rate-limiting step in sialic acid biosynthesis, this enzyme assumes a pivotal role in governing the regulation of cell surface sialylation. Sialic acids represent a category of negatively charged sugars that reside on the surface of cells as terminal components of glycoconjugates and mediate important functions in various cellular processes, including cell adhesion, signal transduction, and cellular recognition. This is Bifunctional UDP-N-acetylglucosamine 2-epimerase/N-acetylmannosamine kinase from Rattus norvegicus (Rat).